Consider the following 934-residue polypeptide: UPF0182 protein sync_1321 (934 aa).

The next 9 membrane-spanning stretches (helical) occupy residues 2–22 (AKIIWTIGRFGLLLIPLIVII), 45–65 (LLLQLGGALFAFLFVGSCALW), 86–106 (GYRYGFCLLACLLVLLSVLAI), 129–149 (FSTGWPLLSLSILMLTLIMFG), 165–185 (VCICLIVARSWGLWSLAFSIP), 208–228 (IAFGLELVLLQLSLTLSTALW), 251–271 (HGLRPGFALVLMSFSGLMWLS), 300–320 (LGSIALLVLAFVVLPSPFSSV), and 327–347 (LILAFIAIASFGLEMVLFPLM).

This sequence belongs to the UPF0182 family.

Its subcellular location is the cell membrane. This Synechococcus sp. (strain CC9311) protein is UPF0182 protein sync_1321.